The chain runs to 243 residues: Fibroblast growth factor 12 (243 aa).

2 disordered regions span residues 1 to 39 and 216 to 243; these read MAAAIASSLIRQKRQARESNSDRVSASKRRSSPSKDGRS and IGEKQGRSRKSSGTPTMNGGKVVNQDST. Residues 11–38 carry the Bipartite nuclear localization signal motif; it reads RQKRQARESNSDRVSASKRRSSPSKDGR.

This sequence belongs to the heparin-binding growth factors family. In terms of assembly, interacts with the C-terminal region of SCN9A. As to expression, brain, eye and testis; highly expressed in embryonic retina, olfactory epithelium, olfactory bulb, and in a segmental pattern of the body wall; in adult olfactory bulb, less in cerebellum, deep cerebellar nuclei, cortex and multiple midbrain structures.

The protein localises to the nucleus. In terms of biological role, involved in nervous system development and function. Involved in the positive regulation of voltage-gated sodium channel activity. Promotes neuronal excitability by elevating the voltage dependence of neuronal sodium channel SCN8A fast inactivation. The protein is Fibroblast growth factor 12 (FGF12) of Homo sapiens (Human).